The following is a 102-amino-acid chain: uncharacterized protein (102 aa).

A disordered region spans residues 1-102 (MPVEQDGLTG…LANIREQNHQ (102 aa)).

This is an uncharacterized protein from Caenorhabditis elegans.